Reading from the N-terminus, the 256-residue chain is ATP synthase subunit a (256 aa).

Residues 1–7 constitute a propeptide, removed in mature form; sequence MLNLFIT. A run of 6 helical transmembrane segments spans residues 33–53, 92–112, 122–142, 148–168, 188–208, and 209–229; these read FTTF…LNLL, YFPL…ISMI, LIFI…IGLT, FFSL…LVLI, VLSG…LMSM, and SIIT…IVVL.

Belongs to the ATPase A chain family. As to quaternary structure, F-type ATPases have 2 components, CF(1) - the catalytic core - and CF(0) - the membrane proton channel. CF(1) has five subunits: alpha(3), beta(3), gamma(1), delta(1), epsilon(1). CF(0) has three main subunits: a, b and c.

It is found in the mitochondrion inner membrane. Its function is as follows. Mitochondrial membrane ATP synthase (F(1)F(0) ATP synthase or Complex V) produces ATP from ADP in the presence of a proton gradient across the membrane which is generated by electron transport complexes of the respiratory chain. F-type ATPases consist of two structural domains, F(1) - containing the extramembraneous catalytic core and F(0) - containing the membrane proton channel, linked together by a central stalk and a peripheral stalk. During catalysis, ATP synthesis in the catalytic domain of F(1) is coupled via a rotary mechanism of the central stalk subunits to proton translocation. Key component of the proton channel; it may play a direct role in the translocation of protons across the membrane. This chain is ATP synthase subunit a (ATP6), found in Kluyveromyces lactis (strain ATCC 8585 / CBS 2359 / DSM 70799 / NBRC 1267 / NRRL Y-1140 / WM37) (Yeast).